Reading from the N-terminus, the 895-residue chain is DNA double-strand break repair Rad50 ATPase (895 aa).

ATP-binding positions include 32 to 38 and Q137; that span reads NGAGKSS. Positions 183-253 form a coiled coil; it reads SDYDYLKNEL…LNAQLETIKK (71 aa). One can recognise a Zinc-hook domain in the interval 411–507; that stretch reads RAEINSSLMQ…ERKHQKKLLD (97 aa). Residues C455 and C458 each contribute to the Zn(2+) site. Coiled-coil stretches lie at residues 464 to 510 and 618 to 647; these read TEKS…DRIN and ENSL…AMDE.

The protein belongs to the SMC family. RAD50 subfamily. Homodimer. Forms a heterotetramer composed of two Mre11 subunits and two Rad50 subunits. Zn(2+) serves as cofactor.

In terms of biological role, part of the Rad50/Mre11 complex, which is involved in the early steps of DNA double-strand break (DSB) repair. The complex may facilitate opening of the processed DNA ends to aid in the recruitment of HerA and NurA. Rad50 controls the balance between DNA end bridging and DNA resection via ATP-dependent structural rearrangements of the Rad50/Mre11 complex. The chain is DNA double-strand break repair Rad50 ATPase from Thermoplasma volcanium (strain ATCC 51530 / DSM 4299 / JCM 9571 / NBRC 15438 / GSS1).